The sequence spans 297 residues: tRNA pseudouridine synthase B (297 aa).

Aspartate 39 acts as the Nucleophile in catalysis.

This sequence belongs to the pseudouridine synthase TruB family. Type 1 subfamily.

It carries out the reaction uridine(55) in tRNA = pseudouridine(55) in tRNA. Its function is as follows. Responsible for synthesis of pseudouridine from uracil-55 in the psi GC loop of transfer RNAs. The chain is tRNA pseudouridine synthase B from Lactobacillus acidophilus (strain ATCC 700396 / NCK56 / N2 / NCFM).